The chain runs to 138 residues: UPF0310 protein MAV_1800 (138 aa).

This sequence belongs to the UPF0310 family.

This Mycobacterium avium (strain 104) protein is UPF0310 protein MAV_1800.